Here is a 342-residue protein sequence, read N- to C-terminus: Tetraacyldisaccharide 4'-kinase (342 aa).

Thr-56–Thr-63 lines the ATP pocket.

It belongs to the LpxK family.

It carries out the reaction a lipid A disaccharide + ATP = a lipid IVA + ADP + H(+). It participates in glycolipid biosynthesis; lipid IV(A) biosynthesis; lipid IV(A) from (3R)-3-hydroxytetradecanoyl-[acyl-carrier-protein] and UDP-N-acetyl-alpha-D-glucosamine: step 6/6. Transfers the gamma-phosphate of ATP to the 4'-position of a tetraacyldisaccharide 1-phosphate intermediate (termed DS-1-P) to form tetraacyldisaccharide 1,4'-bis-phosphate (lipid IVA). The sequence is that of Tetraacyldisaccharide 4'-kinase from Parvibaculum lavamentivorans (strain DS-1 / DSM 13023 / NCIMB 13966).